We begin with the raw amino-acid sequence, 465 residues long: Methionine aminopeptidase 2-2 (465 aa).

Residues 1-11 are compositionally biased toward basic residues; that stretch reads MGSKTPHNHRR. Positions 1–89 are disordered; it reads MGSKTPHNHR…KKKKNTKELE (89 aa). Positions 43–54 are enriched in acidic residues; sequence GESEGGEDEDDD. Basic residues predominate over residues 73 to 84; sequence RNKRKKKKKKKN. H217 is a substrate binding site. Residues D238, D249, and H318 each coordinate a divalent metal cation. H326 is a binding site for substrate. Residues E351 and E446 each contribute to the a divalent metal cation site.

This sequence belongs to the peptidase M24A family. Methionine aminopeptidase eukaryotic type 2 subfamily. Co(2+) serves as cofactor. The cofactor is Zn(2+). Requires Mn(2+) as cofactor. It depends on Fe(2+) as a cofactor.

The protein localises to the cytoplasm. The enzyme catalyses Release of N-terminal amino acids, preferentially methionine, from peptides and arylamides.. In terms of biological role, cotranslationally removes the N-terminal methionine from nascent proteins. The N-terminal methionine is often cleaved when the second residue in the primary sequence is small and uncharged (Met-Ala-, Cys, Gly, Pro, Ser, Thr, or Val). The chain is Methionine aminopeptidase 2-2 from Ajellomyces capsulatus (strain G186AR / H82 / ATCC MYA-2454 / RMSCC 2432) (Darling's disease fungus).